Reading from the N-terminus, the 190-residue chain is 6,7-dimethyl-8-ribityllumazine synthase (190 aa).

Residues tryptophan 31, 65–67, and 89–91 contribute to the 5-amino-6-(D-ribitylamino)uracil site; these read SFE and CVI. Residue 94–95 coordinates (2S)-2-hydroxy-3-oxobutyl phosphate; sequence ET. Histidine 97 functions as the Proton donor in the catalytic mechanism. Phenylalanine 122 contacts 5-amino-6-(D-ribitylamino)uracil. A (2S)-2-hydroxy-3-oxobutyl phosphate-binding site is contributed by arginine 136.

Belongs to the DMRL synthase family.

It carries out the reaction (2S)-2-hydroxy-3-oxobutyl phosphate + 5-amino-6-(D-ribitylamino)uracil = 6,7-dimethyl-8-(1-D-ribityl)lumazine + phosphate + 2 H2O + H(+). It functions in the pathway cofactor biosynthesis; riboflavin biosynthesis; riboflavin from 2-hydroxy-3-oxobutyl phosphate and 5-amino-6-(D-ribitylamino)uracil: step 1/2. Its function is as follows. Catalyzes the formation of 6,7-dimethyl-8-ribityllumazine by condensation of 5-amino-6-(D-ribitylamino)uracil with 3,4-dihydroxy-2-butanone 4-phosphate. This is the penultimate step in the biosynthesis of riboflavin. The polypeptide is 6,7-dimethyl-8-ribityllumazine synthase (Flavobacterium johnsoniae (strain ATCC 17061 / DSM 2064 / JCM 8514 / BCRC 14874 / CCUG 350202 / NBRC 14942 / NCIMB 11054 / UW101) (Cytophaga johnsonae)).